The following is a 719-amino-acid chain: Polyribonucleotide nucleotidyltransferase (719 aa).

Mg(2+) is bound by residues aspartate 490 and aspartate 496. Positions 557 to 619 (PKIEIIIIPK…KSIDAALTRI (63 aa)) constitute a KH domain. An S1 motif domain is found at 629-699 (GEIYEGKIRS…KTGKFKLSHK (71 aa)).

The protein belongs to the polyribonucleotide nucleotidyltransferase family. The cofactor is Mg(2+).

The protein localises to the cytoplasm. The enzyme catalyses RNA(n+1) + phosphate = RNA(n) + a ribonucleoside 5'-diphosphate. In terms of biological role, involved in mRNA degradation. Catalyzes the phosphorolysis of single-stranded polyribonucleotides processively in the 3'- to 5'-direction. This Azobacteroides pseudotrichonymphae genomovar. CFP2 protein is Polyribonucleotide nucleotidyltransferase.